A 235-amino-acid polypeptide reads, in one-letter code: Small heat shock protein, chloroplastic (235 aa).

Disordered stretches follow at residues 1–23 (MAYT…TSKI) and 51–80 (TGDN…ERRP). Residues 52–63 (GDNKDTSVDVHH) show a composition bias toward basic and acidic residues. Positions 64–74 (SSAQGGNNQGT) are enriched in polar residues. The 110-residue stretch at 126–235 (SGTGEIRTPW…EKKVIDVQIN (110 aa)) folds into the sHSP domain.

This sequence belongs to the small heat shock protein (HSP20) family. In fruits, flowers, leaves, and stems.

The protein localises to the plastid. Its subcellular location is the chloroplast. The polypeptide is Small heat shock protein, chloroplastic (HSP21) (Solanum lycopersicum (Tomato)).